The following is a 371-amino-acid chain: GDP-mannose 3,5-epimerase 2 (371 aa).

NAD(+) is bound by residues 29-55, aspartate 53, and aspartate 73; that span reads GAGG…SDWK. Residues glycine 98 and 138 to 140 each bind substrate; that span reads SAC. Positions 168 and 172 each coordinate NAD(+). Tyrosine 168 acts as the Proton acceptor in catalysis. Residues asparagine 197, 210–212, lysine 219, 235–237, arginine 300, and serine 350 each bind substrate; these read EKA and QTR.

Belongs to the NAD(P)-dependent epimerase/dehydratase family. NAD(+) serves as cofactor.

It carries out the reaction GDP-alpha-D-mannose = GDP-beta-L-gulose. The enzyme catalyses GDP-beta-L-gulose = GDP-beta-L-galactose. The protein operates within cofactor biosynthesis; L-ascorbate biosynthesis via GDP-alpha-D-mannose pathway; L-ascorbate from GDP-alpha-D-mannose: step 1/5. In terms of biological role, catalyzes a reversible epimerization of GDP-D-mannose that precedes the committed step in the biosynthesis of vitamin C (L-ascorbate), resulting in the hydrolysis of the highly energetic glycosyl-pyrophosphoryl linkage. Able to catalyze 2 distinct epimerization reactions and can release both GDP-L-galactose and GDP-L-gulose from GDP-mannose. The chain is GDP-mannose 3,5-epimerase 2 (GME-2) from Oryza sativa subsp. japonica (Rice).